The primary structure comprises 371 residues: Protease PrtS (371 aa).

Residue H169 participates in Zn(2+) binding. E170 is an active-site residue. Residues H173 and E193 each contribute to the Zn(2+) site. H273 acts as the Proton donor in catalysis. The segment at 352 to 371 (KEEDKDKGKDEGKDKAETKV) is disordered.

It belongs to the peptidase M4 family. It depends on Zn(2+) as a cofactor.

The protein localises to the secreted. Inhibited by 8 mM 1,10-phenanthroline, but not by EDTA or PMSF. In terms of biological role, metalloprotease involved in the inhibition of insect antibacterial peptides. Reduces the antibacterial activity of G.mellonella hemolymph by 50%. Reduces the antibacterial activity of cecropin A by 80% and completely inhibits cecropin B. The polypeptide is Protease PrtS (Photorhabdus sp. (strain Az29)).